Here is a 2292-residue protein sequence, read N- to C-terminus: Protein Ycf2 (2292 aa).

Residue 1644–1651 (GSIGTGRS) participates in ATP binding.

It belongs to the Ycf2 family.

It is found in the plastid. It localises to the chloroplast stroma. Functionally, probable ATPase of unknown function. Its presence in a non-photosynthetic plant (Epifagus virginiana) and experiments in tobacco indicate that it has an essential function which is probably not related to photosynthesis. The chain is Protein Ycf2 from Morus indica (Mulberry).